Consider the following 425-residue polypeptide: Serine--tRNA ligase (425 aa).

230–232 (TAE) provides a ligand contact to L-serine. 261 to 263 (RSE) contributes to the ATP binding site. Residue Glu284 participates in L-serine binding. 348 to 351 (EISS) contacts ATP. Ser384 contributes to the L-serine binding site.

It belongs to the class-II aminoacyl-tRNA synthetase family. Type-1 seryl-tRNA synthetase subfamily. In terms of assembly, homodimer. The tRNA molecule binds across the dimer.

The protein resides in the cytoplasm. The catalysed reaction is tRNA(Ser) + L-serine + ATP = L-seryl-tRNA(Ser) + AMP + diphosphate + H(+). The enzyme catalyses tRNA(Sec) + L-serine + ATP = L-seryl-tRNA(Sec) + AMP + diphosphate + H(+). It functions in the pathway aminoacyl-tRNA biosynthesis; selenocysteinyl-tRNA(Sec) biosynthesis; L-seryl-tRNA(Sec) from L-serine and tRNA(Sec): step 1/1. Functionally, catalyzes the attachment of serine to tRNA(Ser). Is also able to aminoacylate tRNA(Sec) with serine, to form the misacylated tRNA L-seryl-tRNA(Sec), which will be further converted into selenocysteinyl-tRNA(Sec). This chain is Serine--tRNA ligase, found in Streptococcus pyogenes serotype M12 (strain MGAS2096).